A 150-amino-acid chain; its full sequence is MAARILLINGPNLNLLGTREPSVYGSTTLADVVAQAKTQAASLNVHLEAFQSNHEGAIVDRIHEARGAVDAIVINPGAYTHTSVAIRDALLGVDIPFVETHISNVHAREEWRRHSYFSDKAVAVICGLGTYGYTAAIEFAARHMKMKDRV.

The active-site Proton acceptor is the Y24. The substrate site is built by N75, H81, and D88. Residue H101 is the Proton donor of the active site. Residues 102–103 and R112 each bind substrate; that span reads IS.

The protein belongs to the type-II 3-dehydroquinase family. In terms of assembly, homododecamer. Adopts a ring-like structure, composed of an arrangement of two hexameric rings stacked on top of one another.

The enzyme catalyses 3-dehydroquinate = 3-dehydroshikimate + H2O. The protein operates within aromatic compound metabolism; 3,4-dihydroxybenzoate biosynthesis; 3,4-dihydroxybenzoate from 3-dehydroquinate: step 1/2. Its function is as follows. Is involved in the catabolism of quinate. Allows the utilization of quinate as carbon source via the beta-ketoadipate pathway. The chain is Catabolic 3-dehydroquinase from Verticillium alfalfae (strain VaMs.102 / ATCC MYA-4576 / FGSC 10136) (Verticillium wilt of alfalfa).